A 215-amino-acid polypeptide reads, in one-letter code: Ras-related protein Rab-5A (215 aa).

Ser-29, Ala-30, Gly-32, Lys-33, Ser-34, Ser-35, His-46, Glu-47, Thr-52, and Gly-78 together coordinate GTP. Ser-34 provides a ligand contact to Mg(2+). Short sequence motifs (switch) lie at residues 44 to 56 (QFHEFQESTIGAA) and 77 to 93 (AGQERYHSLAPMYYRGA). Thr-52 serves as a coordination point for Mg(2+). Phosphoserine is present on Ser-84. GTP is bound by residues Asn-133, Lys-134, Asp-136, Ala-164, and Lys-165. The tract at residues 185-215 (EPQNPGINCTRGRGVDLTEPTQPTRSQCCSN) is disordered. Residues 203-215 (EPTQPTRSQCCSN) show a composition bias toward polar residues. Residues Cys-212 and Cys-213 are each lipidated (S-geranylgeranyl cysteine).

This sequence belongs to the small GTPase superfamily. Rab family. In terms of assembly, interacts with GDI1; this promotes dissociation from membranes; phosphorylation at Ser-84 disrupts this interaction. Interacts with GDI2; phosphorylation at Ser-84 disrupts the interaction. Interacts with SGSM1 and SGSM3. Interacts with PIK3CB. Interacts with RIN1 and GAPVD1, which regulate its pathway, probably by acting as a GEF. Interacts with RINL. Interacts with ALS2CL, SUN2, ZFYVE20 and RUFY1. Interacts with RABEP1; one RABEP1 homodimer binds two RAB5A chains, but at opposite sides of the dimer. Interacts with OCRL and INPP5F. May be a component of a complex composed of RAB5A, DYN2 and PIK3C3. Does not interact with the BLOC-3 complex (heterodimer of HPS1 and HPS4). Interacts with CLN5. Interacts with APPL2. Interacts with F8A1/F8A2/F8A3. Found in a complex with F8A1/F8A2/F8A3, HTT and RAB5A; mediates the recruitment of HTT by RAB5A onto early endosomes. Interacts with ATP9A. Interacts with PPP1R21; mediates the recruitment of FERRY complex by RAB5A onto early endosomes. Mg(2+) is required as a cofactor. Post-translationally, phosphorylation of Ser-84 in the switch II region by LRRK2 prevents the association of RAB regulatory proteins, including RAB GDP dissociation inhibitors GDI1 and GDI2.

Its subcellular location is the cell membrane. The protein localises to the early endosome membrane. The protein resides in the melanosome. It localises to the cytoplasmic vesicle. It is found in the cell projection. Its subcellular location is the ruffle. The protein localises to the membrane. The protein resides in the cytoplasm. It localises to the cytosol. It is found in the phagosome membrane. Its subcellular location is the endosome membrane. It carries out the reaction GTP + H2O = GDP + phosphate + H(+). With respect to regulation, regulated by guanine nucleotide exchange factors (GEFs) including RINL, which promote the exchange of bound GDP for free GTP. Regulated by GTPase activating proteins (GAPs) which increase the GTP hydrolysis activity. Inhibited by GDP dissociation inhibitors (GDIs). Its function is as follows. The small GTPases Rab are key regulators of intracellular membrane trafficking, from the formation of transport vesicles to their fusion with membranes. Rabs cycle between an inactive GDP-bound form and an active GTP-bound form that is able to recruit to membranes different sets of downstream effectors directly responsible for vesicle formation, movement, tethering and fusion. RAB5A is required for the fusion of plasma membranes and early endosomes. Contributes to the regulation of filopodia extension. Required for the exosomal release of SDCBP, CD63, PDCD6IP and syndecan. Regulates maturation of apoptotic cell-containing phagosomes, probably downstream of DYN2 and PIK3C3. This is Ras-related protein Rab-5A (RAB5A) from Sus scrofa (Pig).